The primary structure comprises 72 residues: Rubredoxin (72 aa).

The 54-residue stretch at 19–72 (DAVLECKICWQRYDPAEGDPVWQIPPGTPFAALPAHWRCPRCDGDREQFMVVDG) folds into the Rubredoxin-like domain. 4 residues coordinate Fe cation: C24, C27, C57, and C60.

The protein belongs to the rubredoxin family. Requires Fe(3+) as cofactor.

Functionally, rubredoxin is a small nonheme, iron protein lacking acid-labile sulfide. Its single Fe, chelated to 4 Cys, functions as an electron acceptor and may also stabilize the conformation of the molecule. Could be involved in hydrogenase-linked redox processes. The sequence is that of Rubredoxin (hoxR) from Azotobacter vinelandii.